Consider the following 938-residue polypeptide: Isoleucine--tRNA ligase (938 aa).

The 'HIGH' region signature appears at 58–68 (PYANGSIHIGH). Lys-183 carries the N6-acetyllysine modification. Glu-561 contributes to the L-isoleucyl-5'-AMP binding site. The 'KMSKS' region signature appears at 602–606 (KMSKS). ATP is bound at residue Lys-605. The Zn(2+) site is built by Cys-901, Cys-904, Cys-921, and Cys-924.

Belongs to the class-I aminoacyl-tRNA synthetase family. IleS type 1 subfamily. In terms of assembly, monomer. Zn(2+) is required as a cofactor.

It localises to the cytoplasm. It carries out the reaction tRNA(Ile) + L-isoleucine + ATP = L-isoleucyl-tRNA(Ile) + AMP + diphosphate. Catalyzes the attachment of isoleucine to tRNA(Ile). As IleRS can inadvertently accommodate and process structurally similar amino acids such as valine, to avoid such errors it has two additional distinct tRNA(Ile)-dependent editing activities. One activity is designated as 'pretransfer' editing and involves the hydrolysis of activated Val-AMP. The other activity is designated 'posttransfer' editing and involves deacylation of mischarged Val-tRNA(Ile). The sequence is that of Isoleucine--tRNA ligase from Escherichia coli O45:K1 (strain S88 / ExPEC).